A 420-amino-acid chain; its full sequence is CinA-like protein (420 aa).

It belongs to the CinA family.

The protein is CinA-like protein of Chlorobium phaeobacteroides (strain BS1).